The chain runs to 359 residues: RuBisCO accumulation factor 1 (359 aa).

An N-terminal alpha-helix region spans residues L12–D195. The interval P219–I345 is C-terminal beta-sheet.

It belongs to the RAF family. As to quaternary structure, homodimer. Forms an RbcL(8)-Raf1(8) complex. Forms complexes of many stoichiometries with RbcL with and without RbcS. RbcX and Raf1 can bind simultaneously to RbcL.

The protein resides in the cytoplasm. A major RuBisCO chaperone. Acts after GroEL-GroES chaperonin to fold and/or assemble the large subunit of RuBisCO (ccbL, rbcL). Cooperates with RbcX in RbcL folding, plays the major role in assembly of dimers into RbcL(8)-Raf1(8) intermediate complexes. RbcS replaces Raf1, leading to holoenzyme formation. Functionally, raf1 and RbcX are probably functionally redundant; it has been suggested they may cooperate. The chain is RuBisCO accumulation factor 1 from Picosynechococcus sp. (strain ATCC 27264 / PCC 7002 / PR-6) (Agmenellum quadruplicatum).